The sequence spans 178 residues: Large ribosomal subunit protein uL6 (178 aa).

The segment covering 155 to 169 has biased composition (basic and acidic residues); the sequence is PYKGKGIKYDNEQIR. Residues 155–178 are disordered; it reads PYKGKGIKYDNEQIRRKAGKSGGK.

The protein belongs to the universal ribosomal protein uL6 family. In terms of assembly, part of the 50S ribosomal subunit.

Functionally, this protein binds to the 23S rRNA, and is important in its secondary structure. It is located near the subunit interface in the base of the L7/L12 stalk, and near the tRNA binding site of the peptidyltransferase center. This is Large ribosomal subunit protein uL6 from Nitratidesulfovibrio vulgaris (strain DSM 19637 / Miyazaki F) (Desulfovibrio vulgaris).